The following is a 495-amino-acid chain: NADH-ubiquinone oxidoreductase chain 4 (495 aa).

Helical transmembrane passes span Y9–I29, L39–F59, L89–W109, E118–D138, L139–V159, F173–L193, I214–H234, P245–L265, F272–I292, V313–G333, I335–L355, Y367–A387, N388–F408, L413–Y433, and V457–F477.

This sequence belongs to the complex I subunit 4 family.

It is found in the mitochondrion membrane. It carries out the reaction a ubiquinone + NADH + 5 H(+)(in) = a ubiquinol + NAD(+) + 4 H(+)(out). Functionally, core subunit of the mitochondrial membrane respiratory chain NADH dehydrogenase (Complex I) that is believed to belong to the minimal assembly required for catalysis. Complex I functions in the transfer of electrons from NADH to the respiratory chain. The immediate electron acceptor for the enzyme is believed to be ubiquinone. The protein is NADH-ubiquinone oxidoreductase chain 4 (ND4) of Triticum aestivum (Wheat).